We begin with the raw amino-acid sequence, 335 residues long: Phosphatidylglycerol--prolipoprotein diacylglyceryl transferase (335 aa).

The next 3 helical transmembrane spans lie at 31 to 51 (IYWY…TYSL), 67 to 87 (YIFL…LAIG), and 100 to 120 (LAIQ…FPLI). Arg163 contacts a 1,2-diacyl-sn-glycero-3-phospho-(1'-sn-glycerol). Helical transmembrane passes span 213–233 (PLFL…YFGL), 235–255 (YIKQ…YGVT), and 277–297 (SLLL…APLL).

The protein belongs to the Lgt family.

The protein localises to the cell membrane. It catalyses the reaction L-cysteinyl-[prolipoprotein] + a 1,2-diacyl-sn-glycero-3-phospho-(1'-sn-glycerol) = an S-1,2-diacyl-sn-glyceryl-L-cysteinyl-[prolipoprotein] + sn-glycerol 1-phosphate + H(+). Its pathway is protein modification; lipoprotein biosynthesis (diacylglyceryl transfer). Catalyzes the transfer of the diacylglyceryl group from phosphatidylglycerol to the sulfhydryl group of the N-terminal cysteine of a prolipoprotein, the first step in the formation of mature lipoproteins. This Ureaplasma parvum serovar 3 (strain ATCC 27815 / 27 / NCTC 11736) protein is Phosphatidylglycerol--prolipoprotein diacylglyceryl transferase.